The sequence spans 204 residues: Putative peptidase PfaP (204 aa).

Residues 1 to 27 form the signal peptide; it reads MRLRKTRKIVVSMKDMAASGGYYIASS. Ser19 (nucleophile) is an active-site residue. The active-site Proton donor/acceptor is the Lys70.

Belongs to the peptidase S49 family.

In terms of biological role, possible protease. May be involved in export of periplasmic flagella proteins. The chain is Putative peptidase PfaP (pfaP) from Leptospira borgpetersenii.